Reading from the N-terminus, the 458-residue chain is N-acetylgalactosamine kinase (458 aa).

4 residues coordinate alpha-D-galactose: Arg43, Glu49, His50, and Asp52. The ATP site is built by Gly143, Ser145, and Ser146. Asp190 is an alpha-D-galactose binding site. Residue Asp190 is the Proton acceptor of the active site. ATP contacts are provided by Asn233 and Lys234.

Belongs to the GHMP kinase family. GalK subfamily. As to quaternary structure, monomer.

The enzyme catalyses N-acetyl-alpha-D-galactosamine + ATP = N-acetyl-alpha-D-galactosamine 1-phosphate + ADP + H(+). Functionally, acts on GalNAc. Also acts as a galactokinase when galactose is present at high concentrations. May be involved in a salvage pathway for the reutilization of free GalNAc derived from the degradation of complex carbohydrates. This is N-acetylgalactosamine kinase (GALK2) from Homo sapiens (Human).